We begin with the raw amino-acid sequence, 142 residues long: Prefoldin subunit alpha (142 aa).

It belongs to the prefoldin subunit alpha family. In terms of assembly, heterohexamer of two alpha and four beta subunits.

It is found in the cytoplasm. Functionally, molecular chaperone capable of stabilizing a range of proteins. Seems to fulfill an ATP-independent, HSP70-like function in archaeal de novo protein folding. This is Prefoldin subunit alpha from Methanosarcina mazei (strain ATCC BAA-159 / DSM 3647 / Goe1 / Go1 / JCM 11833 / OCM 88) (Methanosarcina frisia).